A 210-amino-acid polypeptide reads, in one-letter code: Dephospho-CoA kinase (210 aa).

The 199-residue stretch at 4–202 (WVGLTGGIGS…AFYSGIFASK (199 aa)) folds into the DPCK domain. 12–17 (GSGKSA) lines the ATP pocket.

The protein belongs to the CoaE family.

Its subcellular location is the cytoplasm. The catalysed reaction is 3'-dephospho-CoA + ATP = ADP + CoA + H(+). Its pathway is cofactor biosynthesis; coenzyme A biosynthesis; CoA from (R)-pantothenate: step 5/5. In terms of biological role, catalyzes the phosphorylation of the 3'-hydroxyl group of dephosphocoenzyme A to form coenzyme A. The sequence is that of Dephospho-CoA kinase from Neisseria meningitidis serogroup A / serotype 4A (strain DSM 15465 / Z2491).